Here is a 339-residue protein sequence, read N- to C-terminus: RNA 3'-terminal phosphate cyclase (339 aa).

ATP is bound by residues Q103 and 283-287 (HLADQ). H308 functions as the Tele-AMP-histidine intermediate in the catalytic mechanism.

It belongs to the RNA 3'-terminal cyclase family. Type 1 subfamily.

The protein resides in the cytoplasm. The catalysed reaction is a 3'-end 3'-phospho-ribonucleotide-RNA + ATP = a 3'-end 2',3'-cyclophospho-ribonucleotide-RNA + AMP + diphosphate. In terms of biological role, catalyzes the conversion of 3'-phosphate to a 2',3'-cyclic phosphodiester at the end of RNA. The mechanism of action of the enzyme occurs in 3 steps: (A) adenylation of the enzyme by ATP; (B) transfer of adenylate to an RNA-N3'P to produce RNA-N3'PP5'A; (C) and attack of the adjacent 2'-hydroxyl on the 3'-phosphorus in the diester linkage to produce the cyclic end product. The biological role of this enzyme is unknown but it is likely to function in some aspects of cellular RNA processing. This Salmonella enteritidis PT4 (strain P125109) protein is RNA 3'-terminal phosphate cyclase.